The primary structure comprises 347 residues: N-acetyl-gamma-glutamyl-phosphate reductase (347 aa).

Cysteine 151 is an active-site residue.

Belongs to the NAGSA dehydrogenase family. Type 1 subfamily.

The protein localises to the cytoplasm. The enzyme catalyses N-acetyl-L-glutamate 5-semialdehyde + phosphate + NADP(+) = N-acetyl-L-glutamyl 5-phosphate + NADPH + H(+). It participates in amino-acid biosynthesis; L-arginine biosynthesis; N(2)-acetyl-L-ornithine from L-glutamate: step 3/4. Functionally, catalyzes the NADPH-dependent reduction of N-acetyl-5-glutamyl phosphate to yield N-acetyl-L-glutamate 5-semialdehyde. This Pelotomaculum thermopropionicum (strain DSM 13744 / JCM 10971 / SI) protein is N-acetyl-gamma-glutamyl-phosphate reductase.